Consider the following 240-residue polypeptide: Protein unc-119 homolog A (240 aa).

The segment covering 1-12 (MKVKKGGGGTGS) has biased composition (gly residues). Positions 1–62 (MKVKKGGGGT…PLQGKQPIGP (62 aa)) are disordered. Phosphoserine; by CK2 is present on residues S37, S39, and S41. Y131 contributes to the tetradecanoate binding site.

Belongs to the PDE6D/unc-119 family. May interact with GTP-bound ARL1. Interacts with ARL2 and ARL3 (GTP-bound forms); this promotes the release of myristoylated cargo proteins. Found in a complex with ARL3, RP2 and UNC119; RP2 induces hydrolysis of GTP ARL3 in the complex, leading to the release of UNC119. Interacts with NPHP3 (when myristoylated). Interacts with CYS1 (when myristoylated). Interacts with MACIR; interaction only takes place when UNC119 is not liganded with myristoylated proteins. Interacts with CABP4; in the absence of calcium. Interacts with DNM1; leading to a decrease of DNM1 GTPase activity. Interacts with LCK; this interaction plays a crucial role in activation of LCK. Interacts with FYN. Interacts with RAB11A; in a cell cycle-dependent manner. Interacts with LYN (via SH2 and SH3 domains); leading to LYN activation. Found in a complex with ABL1, ABL2, CRK and UNC119; leading to the inhibition of CRK phosphorylation by ABL kinases. Interacts with CD44. Interacts with KLHL18 (via kelch repeats). Interacts with PPP3CA, PPP3CB and PPP3CC. Interacts with USP48; this interaction promotes UNC119 stability. Phosphorylation suppresses its interaction with KLHL18 and down-regulates its KLHL18-mediated degradation. Phosphorylated more under light conditions than dark conditions. Dephosphorylated by calcineurin. As to expression, localized in photoreceptor synapses in the outer plexiform layer of the retina.

It localises to the cytoplasm. It is found in the cytoskeleton. The protein resides in the microtubule organizing center. Its subcellular location is the centrosome. The protein localises to the spindle. It localises to the spindle pole. Functionally, involved in synaptic functions in photoreceptor cells, the signal transduction in immune cells as a Src family kinase activator, endosome recycling, the uptake of bacteria and endocytosis, protein trafficking in sensory neurons and as lipid-binding chaperone with specificity for a diverse subset of myristoylated proteins. Specifically binds the myristoyl moiety of a subset of N-terminally myristoylated proteins and is required for their localization. Binds myristoylated GNAT1 and is required for G-protein localization and trafficking in sensory neurons. Probably plays a role in trafficking proteins in photoreceptor cells. Plays important roles in mediating Src family kinase signals for the completion of cytokinesis via RAB11A. This Mus musculus (Mouse) protein is Protein unc-119 homolog A (Unc119).